Consider the following 234-residue polypeptide: Small ribosomal subunit protein uS3 (234 aa).

In terms of domain architecture, KH type-2 spans 39-107 (IRKMLKERLK…EVHLNLVEVR (69 aa)). Basic and acidic residues predominate over residues 215–227 (QERRLQESGEQRA). Residues 215–234 (QERRLQESGEQRARSGRQAA) are disordered.

Belongs to the universal ribosomal protein uS3 family. Part of the 30S ribosomal subunit. Forms a tight complex with proteins S10 and S14.

In terms of biological role, binds the lower part of the 30S subunit head. Binds mRNA in the 70S ribosome, positioning it for translation. This Maricaulis maris (strain MCS10) (Caulobacter maris) protein is Small ribosomal subunit protein uS3.